Here is a 190-residue protein sequence, read N- to C-terminus: Photosynthetic NDH subunit of lumenal location 2, chloroplastic (190 aa).

Residues 1–31 (MSSFTTTNTPPPYLLRKIYHRRVNQPFSVVC) constitute a chloroplast transit peptide. The N-terminal 37 residues, 32–68 (CTGEPQQDIFTRRRTLTSLITFTVIGGATSSALAQEK), are a transit peptide targeting the thylakoid. 2 coiled-coil regions span residues 87-107 (EDAAARIKQTAEGLRDMREML) and 139-159 (ESRRNDYVQAANELVENMSEL).

It belongs to the PsbQ family. As to quaternary structure, part of the chloroplast NDH complex, composed of a mixture of chloroplast and nucleus encoded subunits. Component of the NDH lumenal subcomplex, at least composed of PnsL1, PnsL2, PnsL3, PnsL4 and PnsL5.

It is found in the plastid. The protein localises to the chloroplast thylakoid membrane. Functionally, NDH shuttles electrons from NAD(P)H:plastoquinone, via FMN and iron-sulfur (Fe-S) centers, to quinones in the photosynthetic chain and possibly in a chloroplast respiratory chain. The immediate electron acceptor for the enzyme in this species is believed to be plastoquinone. Couples the redox reaction to proton translocation, and thus conserves the redox energy in a proton gradient. Required for both formation and activity of the chloroplast NAD(P)H dehydrogenase (NDH) complex. The protein is Photosynthetic NDH subunit of lumenal location 2, chloroplastic of Arabidopsis thaliana (Mouse-ear cress).